Reading from the N-terminus, the 223-residue chain is Ribonuclease T (223 aa).

The Exonuclease domain maps to 20–194; that stretch reads VVIDVETAGF…YDTERTAELF (175 aa). Mg(2+) contacts are provided by D23, E25, H181, and D186. The active-site Proton donor/acceptor is the H181.

It belongs to the RNase T family. In terms of assembly, homodimer. Mg(2+) is required as a cofactor.

Its function is as follows. Trims short 3' overhangs of a variety of RNA species, leaving a one or two nucleotide 3' overhang. Responsible for the end-turnover of tRNA: specifically removes the terminal AMP residue from uncharged tRNA (tRNA-C-C-A). Also appears to be involved in tRNA biosynthesis. The polypeptide is Ribonuclease T (Shewanella baltica (strain OS155 / ATCC BAA-1091)).